The chain runs to 1288 residues: 5-oxoprolinase (1288 aa).

Residues Pro-1248–Pro-1270 form a disordered region. The span at Pro-1259–Pro-1270 shows a compositional bias: pro residues. Ser-1265 carries the phosphoserine modification.

The protein belongs to the oxoprolinase family. In terms of assembly, homodimer. Expressed in testis, kidney and liver.

It is found in the cytoplasm. The protein resides in the cytosol. It carries out the reaction 5-oxo-L-proline + ATP + 2 H2O = L-glutamate + ADP + phosphate + H(+). Its function is as follows. Catalyzes the cleavage of 5-oxo-L-proline to form L-glutamate coupled to the hydrolysis of ATP to ADP and inorganic phosphate. The polypeptide is 5-oxoprolinase (Oplah) (Rattus norvegicus (Rat)).